A 33-amino-acid chain; its full sequence is Dermaseptin DS VIII-like peptide (33 aa).

Ala33 carries the post-translational modification Alanine amide.

In terms of tissue distribution, expressed by the parotoid glands.

The protein resides in the secreted. Functionally, possesses a potent antimicrobial activity against bacteria, fungi and protozoa. Probably acts by disturbing membrane functions with its amphipathic structure. This Phyllomedusa burmeisteri (Brazilian common walking leaf frog) protein is Dermaseptin DS VIII-like peptide.